A 217-amino-acid polypeptide reads, in one-letter code: Small ribosomal subunit protein uS3c (217 aa).

The KH type-2 domain occupies 39 to 109; sequence IRSCIEKQLH…QIRINLIEIT (71 aa).

This sequence belongs to the universal ribosomal protein uS3 family. Part of the 30S ribosomal subunit.

The protein localises to the plastid. It localises to the chloroplast. The sequence is that of Small ribosomal subunit protein uS3c (rps3) from Gracilaria tenuistipitata var. liui (Red alga).